We begin with the raw amino-acid sequence, 146 residues long: Large ribosomal subunit protein uL15 (146 aa).

The disordered stretch occupies residues 1-57; it reads MDLSNLKAAEGSVHSDNFRRGRGHGSGNGKTAGKGHKGQKARSGAPRPGFEGGQMPL.

It belongs to the universal ribosomal protein uL15 family. In terms of assembly, part of the 50S ribosomal subunit.

Its function is as follows. Binds to the 23S rRNA. The chain is Large ribosomal subunit protein uL15 from Agathobacter rectalis (strain ATCC 33656 / DSM 3377 / JCM 17463 / KCTC 5835 / VPI 0990) (Eubacterium rectale).